The following is a 116-amino-acid chain: U16-barytoxin-Tl1c (116 aa).

An N-terminal signal peptide occupies residues M1 to A20. The propeptide occupies N21–R74. 3 disulfides stabilise this stretch: C75–C90, C82–C95, and C89–C110.

It belongs to the neurotoxin 14 (magi-1) family. 06 (ICK-Trit) subfamily. As to expression, expressed by the venom gland.

The protein localises to the secreted. In terms of biological role, ion channel inhibitor. This is U16-barytoxin-Tl1c from Trittame loki (Brush-footed trapdoor spider).